Reading from the N-terminus, the 319-residue chain is MTQDYRVLLYYQYVPIEDGETFAQKHLADCKELGLKGRILVADEGINGTVSGTIEQTNAYMELMKNDPRFSSTIFKIDEAEQNAFKKMHVRYRPELVNLSLEDDVNPLELTGAYLDPKEFREAMLDENTVVIDARNDYEFDLGHFRGAIRPEIRSFRELPQWIRDNKEQFMEKRVLTYCTGGIRCEKFSGWLVREGFKDVGQLHGGIATYGKDPEVQGDLWDGQMYVFDSRIAVPINQKEHVIVGRDWFDGSPCERYINCGNPECNRQMLASEENEAKYLGACSHECRVHPNNRYIKAHQLSNQEVQERLALLEKDLAS.

The region spanning Leu125–Asp219 is the Rhodanese domain. The active-site Cysteine persulfide intermediate is Cys179.

The protein belongs to the TrhO family.

The enzyme catalyses uridine(34) in tRNA + AH2 + O2 = 5-hydroxyuridine(34) in tRNA + A + H2O. Its function is as follows. Catalyzes oxygen-dependent 5-hydroxyuridine (ho5U) modification at position 34 in tRNAs. The chain is tRNA uridine(34) hydroxylase from Lactococcus lactis subsp. lactis (strain IL1403) (Streptococcus lactis).